Here is a 103-residue protein sequence, read N- to C-terminus: MATKLSIIVFSIVVLHLLLSAHMHFLINVCAECETKSAIPPLLECGPRCGDRCSNTQYKKPCLFFCNKCCNKCLCVPPGTYGNKQVCPCYNNWKTKSGGPKCP.

A signal peptide spans 1-20 (MATKLSIIVFSIVVLHLLLS).

Belongs to the GASA family. In terms of processing, six disulfide bonds may be present.

It localises to the secreted. Functionally, gibberellin-regulated protein that may function in hormonal controlled steps of development such as seed germination, flowering and seed maturation. This Arabidopsis thaliana (Mouse-ear cress) protein is Gibberellin-regulated protein 13 (GASA13).